Here is a 36-residue protein sequence, read N- to C-terminus: Omega-agatoxin-Aa1b (36 aa).

This sequence belongs to the neurotoxin 04 (omega-agtx) family. 01 (type I omega-agtx) subfamily. Expressed by the venom gland.

Its subcellular location is the secreted. Omega-agatoxin are antagonist of voltage-gated calcium channels. They block insect neuromuscular transmission presynaptically. This toxin is a blocker of L-type calcium channels (Cav/CACNA1). The chain is Omega-agatoxin-Aa1b from Agelenopsis aperta (North American funnel-web spider).